We begin with the raw amino-acid sequence, 136 residues long: Large ribosomal subunit protein uL16 (136 aa).

The protein belongs to the universal ribosomal protein uL16 family. In terms of assembly, part of the 50S ribosomal subunit.

Binds 23S rRNA and is also seen to make contacts with the A and possibly P site tRNAs. This chain is Large ribosomal subunit protein uL16, found in Erwinia tasmaniensis (strain DSM 17950 / CFBP 7177 / CIP 109463 / NCPPB 4357 / Et1/99).